The sequence spans 282 residues: Nudix hydrolase 7 (282 aa).

The Nudix hydrolase domain maps to 101 to 233; sequence SHVVGAGALV…KNEMFKFMAN (133 aa). The Nudix box motif lies at 139–160; sequence GVINEGEDIWTGVAREVEEETG. 2 residues coordinate Mg(2+): glutamate 154 and glutamate 158.

It belongs to the Nudix hydrolase family. As to quaternary structure, homodimer. Interacts with RACK1A, GG1 and GG2. It depends on Mg(2+) as a cofactor. Expressed in stems, leaves, roots, flowers and siliques.

The protein resides in the nucleus. The protein localises to the cytoplasm. It is found in the cell membrane. The catalysed reaction is ADP-D-ribose + H2O = D-ribose 5-phosphate + AMP + 2 H(+). The enzyme catalyses NAD(+) + H2O = beta-nicotinamide D-ribonucleotide + AMP + 2 H(+). It catalyses the reaction NADH + H2O = reduced beta-nicotinamide D-ribonucleotide + AMP + 2 H(+). With respect to regulation, not inhibited by fluoride. Its function is as follows. Mediates the hydrolysis of some nucleoside diphosphate derivatives. Can use both NADH and ADP-ribose as substrates, but not 8-oxo-dGTP, cyclic ADP-ribose, GDP-mannose, UDP-glucose, ATP, or GTP. Exerts negative control of EDS1 signaling. This is Nudix hydrolase 7 (NUDT7) from Arabidopsis thaliana (Mouse-ear cress).